The sequence spans 217 residues: Probable GTP-binding protein EngB (217 aa).

An EngB-type G domain is found at Gly-33 to Arg-217. GTP contacts are provided by residues Gly-41–Ser-48, Gly-68–Glu-72, Asp-95–Gly-98, Thr-162–Asp-165, and Thr-196–Ser-198. 2 residues coordinate Mg(2+): Ser-48 and Thr-70.

This sequence belongs to the TRAFAC class TrmE-Era-EngA-EngB-Septin-like GTPase superfamily. EngB GTPase family. Mg(2+) is required as a cofactor.

In terms of biological role, necessary for normal cell division and for the maintenance of normal septation. In Rhizobium meliloti (strain 1021) (Ensifer meliloti), this protein is Probable GTP-binding protein EngB.